Here is a 686-residue protein sequence, read N- to C-terminus: Ovotransferrin (686 aa).

Transferrin-like domains lie at 7 to 333 (VRWC…SLRK) and 345 to 670 (IQWC…SLNT). Intrachain disulfides connect C10–C45, C20–C36, C115–C197, C160–C174, C171–C182, and C228–C242. The interval 333-341 (KDQLTVGPR) is connecting region. Cystine bridges form between C348–C380, C358–C371, C405–C680, C421–C643, C454–C530, C478–C671, C488–C502, C499–C513, and C570–C584. A glycan (N-linked (GlcNAc...) asparagine) is linked at N473. N548 is a glycosylation site (N-linked (GlcNAc...) asparagine).

It belongs to the transferrin family. Monomer.

The protein localises to the secreted. In terms of biological role, transferrins are iron binding transport proteins which can bind two Fe(3+) ions in association with the binding of an anion, usually bicarbonate. It is responsible for the transport of iron from sites of absorption and heme degradation to those of storage and utilization. Serum transferrin may also have a further role in stimulating cell proliferation. Its function is as follows. Ovotransferrin has a bacteriostatic function. Its concentration in avian egg is the highest concentration of any transferrin in vivo. The sequence is that of Ovotransferrin from Anas platyrhynchos (Mallard).